Consider the following 511-residue polypeptide: Probable cytochrome P450 4ac2 (511 aa).

Glu318 and Cys455 together coordinate heme.

The protein belongs to the cytochrome P450 family. It depends on heme as a cofactor.

The protein localises to the endoplasmic reticulum membrane. Its subcellular location is the microsome membrane. Its function is as follows. May be involved in the metabolism of insect hormones and in the breakdown of synthetic insecticides. This is Probable cytochrome P450 4ac2 (Cyp4ac2) from Drosophila melanogaster (Fruit fly).